Here is a 171-residue protein sequence, read N- to C-terminus: Transcription antitermination protein NusB (171 aa).

This sequence belongs to the NusB family.

Functionally, involved in transcription antitermination. Required for transcription of ribosomal RNA (rRNA) genes. Binds specifically to the boxA antiterminator sequence of the ribosomal RNA (rrn) operons. The sequence is that of Transcription antitermination protein NusB from Brucella suis (strain ATCC 23445 / NCTC 10510).